The sequence spans 227 residues: Ribosomal RNA large subunit methyltransferase E (227 aa).

S-adenosyl-L-methionine contacts are provided by Gly78, Trp80, Asp103, Asp119, and Asp143. Lys183 functions as the Proton acceptor in the catalytic mechanism.

The protein belongs to the class I-like SAM-binding methyltransferase superfamily. RNA methyltransferase RlmE family.

It is found in the cytoplasm. It carries out the reaction uridine(2552) in 23S rRNA + S-adenosyl-L-methionine = 2'-O-methyluridine(2552) in 23S rRNA + S-adenosyl-L-homocysteine + H(+). In terms of biological role, specifically methylates the uridine in position 2552 of 23S rRNA at the 2'-O position of the ribose in the fully assembled 50S ribosomal subunit. The protein is Ribosomal RNA large subunit methyltransferase E of Rickettsia bellii (strain RML369-C).